We begin with the raw amino-acid sequence, 409 residues long: Carbamoyl phosphate synthase arginine-specific small chain (409 aa).

The 193-residue stretch at 197–389 folds into the Glutamine amidotransferase type-1 domain; the sequence is NVALIDCGVK…FDNMSQYRAL (193 aa). The active-site Nucleophile is cysteine 277. Active-site residues include histidine 362 and glutamate 364.

Belongs to the CarA family. In terms of assembly, heterodimer composed of 2 chains; the small (or glutamine) chain promotes the hydrolysis of glutamine to ammonia, which is used by the large (or ammonia) chain to synthesize carbamoyl phosphate.

The protein localises to the cytoplasm. It carries out the reaction hydrogencarbonate + L-glutamine + 2 ATP + H2O = carbamoyl phosphate + L-glutamate + 2 ADP + phosphate + 2 H(+). It catalyses the reaction L-glutamine + H2O = L-glutamate + NH4(+). It participates in amino-acid biosynthesis; L-arginine biosynthesis; carbamoyl phosphate from bicarbonate: step 1/1. Small subunit of the arginine-specific carbamoyl phosphate synthase (CPSase). CPSase catalyzes the formation of carbamoyl phosphate from the ammonia moiety of glutamine, carbonate, and phosphate donated by ATP, constituting the first step of 2 biosynthetic pathways, one leading to arginine and/or urea and the other to pyrimidine nucleotides. The small subunit (glutamine amidotransferase) binds and cleaves glutamine to supply the large subunit with the substrate ammonia. This is Carbamoyl phosphate synthase arginine-specific small chain (CPA1) from Kluyveromyces lactis (strain ATCC 8585 / CBS 2359 / DSM 70799 / NBRC 1267 / NRRL Y-1140 / WM37) (Yeast).